We begin with the raw amino-acid sequence, 342 residues long: 4-amino-5-hydroxymethyl-2-methylpyrimidine phosphate synthase (342 aa).

Residue K62 is modified to N6-(pyridoxal phosphate)lysine. H66 is a catalytic residue. Residue 115 to 118 participates in pyridoxal 5'-phosphate binding; that stretch reads GEFG. The CCCFC; essential for catalytic activity, may be the site of iron coordination motif lies at 195–199; the sequence is CCCFC.

The protein belongs to the NMT1/THI5 family. As to quaternary structure, homodimer. Requires Fe cation as cofactor.

The enzyme catalyses N(6)-(pyridoxal phosphate)-L-lysyl-[4-amino-5-hydroxymethyl-2-methylpyrimidine phosphate synthase] + L-histidyl-[4-amino-5-hydroxymethyl-2-methylpyrimidine phosphate synthase] + 2 Fe(3+) + 4 H2O = L-lysyl-[4-amino-5-hydroxymethyl-2-methylpyrimidine phosphate synthase] + (2S)-2-amino-5-hydroxy-4-oxopentanoyl-[4-amino-5-hydroxymethyl-2-methylpyrimidine phosphate synthase] + 4-amino-2-methyl-5-(phosphooxymethyl)pyrimidine + 3-oxopropanoate + 2 Fe(2+) + 2 H(+). It functions in the pathway cofactor biosynthesis; thiamine diphosphate biosynthesis. Responsible for the formation of the pyrimidine heterocycle in the thiamine biosynthesis pathway. Catalyzes the formation of hydroxymethylpyrimidine phosphate (HMP-P) from histidine and pyridoxal phosphate (PLP). The protein uses PLP and the active site histidine to form HMP-P, generating an inactive enzyme. The enzyme can only undergo a single turnover, which suggests it is a suicide enzyme. The protein is 4-amino-5-hydroxymethyl-2-methylpyrimidine phosphate synthase of Aspergillus parasiticus.